Here is a 663-residue protein sequence, read N- to C-terminus: DNA ligase 1 (663 aa).

Residues D30–D34 and S78–L79 each bind NAD(+). The N6-AMP-lysine intermediate role is filled by K105. NAD(+) contacts are provided by R126, E161, and K294. Residues C389, C392, C407, and C412 each coordinate Zn(2+). One can recognise a BRCT domain in the interval A574 to V663.

Belongs to the NAD-dependent DNA ligase family. LigA subfamily. The cofactor is Mg(2+). Requires Mn(2+) as cofactor.

The enzyme catalyses NAD(+) + (deoxyribonucleotide)n-3'-hydroxyl + 5'-phospho-(deoxyribonucleotide)m = (deoxyribonucleotide)n+m + AMP + beta-nicotinamide D-nucleotide.. Functionally, DNA ligase that catalyzes the formation of phosphodiester linkages between 5'-phosphoryl and 3'-hydroxyl groups in double-stranded DNA using NAD as a coenzyme and as the energy source for the reaction. It is essential for DNA replication and repair of damaged DNA. In Nocardia farcinica (strain IFM 10152), this protein is DNA ligase 1.